The primary structure comprises 211 residues: Small ribosomal subunit protein uS3 (211 aa).

The KH type-2 domain occupies 16–85 (IDEYFKTKLV…NPQIEVKQVE (70 aa)).

The protein belongs to the universal ribosomal protein uS3 family. In terms of assembly, part of the 30S ribosomal subunit.

Functionally, binds the lower part of the 30S subunit head. The polypeptide is Small ribosomal subunit protein uS3 (Methanococcus maripaludis (strain DSM 14266 / JCM 13030 / NBRC 101832 / S2 / LL)).